The sequence spans 428 residues: Serine--tRNA ligase (428 aa).

Residue 231 to 233 (TAE) coordinates L-serine. Position 262 to 264 (262 to 264 (RSE)) interacts with ATP. Glu-285 contacts L-serine. 349 to 352 (EISS) contributes to the ATP binding site. Ser-385 contributes to the L-serine binding site.

This sequence belongs to the class-II aminoacyl-tRNA synthetase family. Type-1 seryl-tRNA synthetase subfamily. In terms of assembly, homodimer. The tRNA molecule binds across the dimer.

Its subcellular location is the cytoplasm. It catalyses the reaction tRNA(Ser) + L-serine + ATP = L-seryl-tRNA(Ser) + AMP + diphosphate + H(+). The enzyme catalyses tRNA(Sec) + L-serine + ATP = L-seryl-tRNA(Sec) + AMP + diphosphate + H(+). Its pathway is aminoacyl-tRNA biosynthesis; selenocysteinyl-tRNA(Sec) biosynthesis; L-seryl-tRNA(Sec) from L-serine and tRNA(Sec): step 1/1. Catalyzes the attachment of serine to tRNA(Ser). Is also able to aminoacylate tRNA(Sec) with serine, to form the misacylated tRNA L-seryl-tRNA(Sec), which will be further converted into selenocysteinyl-tRNA(Sec). This is Serine--tRNA ligase from Staphylococcus aureus (strain bovine RF122 / ET3-1).